Consider the following 346-residue polypeptide: Probable choline kinase 3 (346 aa).

Arginine 71, glutamine 207, and aspartate 224 together coordinate ATP.

Belongs to the choline/ethanolamine kinase family.

The catalysed reaction is choline + ATP = phosphocholine + ADP + H(+). It functions in the pathway phospholipid metabolism; phosphatidylcholine biosynthesis; phosphocholine from choline: step 1/1. Its function is as follows. Involved in phospholipid biosynthesis. Catalyzes the first step in phosphatidylcholine biosynthesis. This Arabidopsis thaliana (Mouse-ear cress) protein is Probable choline kinase 3.